Reading from the N-terminus, the 632-residue chain is Cyclic GMP-AMP synthase-like receptor 2 (632 aa).

3 residues coordinate Mg(2+): Asp71, Asp73, and Asp181. Asp295 contacts Mn(2+).

This sequence belongs to the mab-21 family. It depends on Mg(2+) as a cofactor. Mn(2+) is required as a cofactor.

Its function is as follows. Nucleotidyltransferase that catalyzes the formation of some cyclic nucleotide and plays a key role in innate immunity. Directly binds some unknown ligand, activating the nucleotidyltransferase activity, leading to synthesis of a second messenger that binds to and activates Sting, thereby triggering the immune response via activation of the NF-kappa-B transcription factor. The chain is Cyclic GMP-AMP synthase-like receptor 2 from Crassostrea virginica (Eastern oyster).